Consider the following 340-residue polypeptide: Glyceraldehyde-3-phosphate dehydrogenase, cytosolic (340 aa).

NAD(+)-binding positions include 16-17 (RI), Asp38, and Arg85. Residues 156 to 158 (SCT), Thr187, 216 to 217 (TG), and Arg239 each bind D-glyceraldehyde 3-phosphate. The active-site Nucleophile is the Cys157. Asn321 contributes to the NAD(+) binding site.

This sequence belongs to the glyceraldehyde-3-phosphate dehydrogenase family. In terms of assembly, homotetramer.

It is found in the cytoplasm. The catalysed reaction is D-glyceraldehyde 3-phosphate + phosphate + NAD(+) = (2R)-3-phospho-glyceroyl phosphate + NADH + H(+). The protein operates within carbohydrate degradation; glycolysis; pyruvate from D-glyceraldehyde 3-phosphate: step 1/5. Key enzyme in glycolysis that catalyzes the first step of the pathway by converting D-glyceraldehyde 3-phosphate (G3P) into 3-phospho-D-glyceroyl phosphate. Essential for the maintenance of cellular ATP levels and carbohydrate metabolism. This Pinus sylvestris (Scotch pine) protein is Glyceraldehyde-3-phosphate dehydrogenase, cytosolic (GAPC).